Here is a 377-residue protein sequence, read N- to C-terminus: RIB43A-like with coiled-coils protein 2 (377 aa).

2 coiled-coil regions span residues Asn217–Asp250 and Glu282–Asp308.

This sequence belongs to the RIB43A family. In terms of assembly, microtubule inner protein component of sperm flagellar doublet microtubules. Expressed in trachea multiciliated cells.

It localises to the cytoplasm. Its subcellular location is the cytoskeleton. It is found in the cilium axoneme. The protein localises to the flagellum axoneme. Microtubule inner protein (MIP) part of the dynein-decorated doublet microtubules (DMTs) in cilia axoneme, which is required for motile cilia beating. The chain is RIB43A-like with coiled-coils protein 2 from Bos taurus (Bovine).